The following is a 330-amino-acid chain: Ribosomal RNA small subunit methyltransferase H (330 aa).

Residues 48–50 (GGH), D67, L101, D115, and Q122 contribute to the S-adenosyl-L-methionine site.

This sequence belongs to the methyltransferase superfamily. RsmH family.

It localises to the cytoplasm. It carries out the reaction cytidine(1402) in 16S rRNA + S-adenosyl-L-methionine = N(4)-methylcytidine(1402) in 16S rRNA + S-adenosyl-L-homocysteine + H(+). Functionally, specifically methylates the N4 position of cytidine in position 1402 (C1402) of 16S rRNA. The protein is Ribosomal RNA small subunit methyltransferase H of Pseudarthrobacter chlorophenolicus (strain ATCC 700700 / DSM 12829 / CIP 107037 / JCM 12360 / KCTC 9906 / NCIMB 13794 / A6) (Arthrobacter chlorophenolicus).